Here is a 250-residue protein sequence, read N- to C-terminus: Hydroxyacylglutathione hydrolase (250 aa).

The Zn(2+) site is built by His-52, His-54, Asp-56, His-57, His-107, Asp-128, and His-166.

This sequence belongs to the metallo-beta-lactamase superfamily. Glyoxalase II family. Monomer. It depends on Zn(2+) as a cofactor.

The enzyme catalyses an S-(2-hydroxyacyl)glutathione + H2O = a 2-hydroxy carboxylate + glutathione + H(+). Its pathway is secondary metabolite metabolism; methylglyoxal degradation; (R)-lactate from methylglyoxal: step 2/2. Its function is as follows. Thiolesterase that catalyzes the hydrolysis of S-D-lactoyl-glutathione to form glutathione and D-lactic acid. This chain is Hydroxyacylglutathione hydrolase, found in Neisseria gonorrhoeae (strain NCCP11945).